The chain runs to 114 residues: Small ribosomal subunit protein bS6 (114 aa).

Belongs to the bacterial ribosomal protein bS6 family.

In terms of biological role, binds together with bS18 to 16S ribosomal RNA. This chain is Small ribosomal subunit protein bS6, found in Protochlamydia amoebophila (strain UWE25).